Consider the following 166-residue polypeptide: MFPMVTEFMNYGQQTVRAARYIGQGFMITLSHANRLPVTIQYPYEKLITSERFRGRIHFEFDKCIACEVCVRVCPIDLPVVDWKLETDIRKKRLLNYSIDFGICIFCGNCVEYCPTNCLSMTEEYELSTYDRHELNYNQIALGRLPMSIIDNYTIRTILNLPEIKT.

4Fe-4S ferredoxin-type domains follow at residues 55-84 (GRIH…VDWK) and 95-124 (LNYS…MTEE). Residues cysteine 64, cysteine 67, cysteine 70, cysteine 74, cysteine 104, cysteine 107, cysteine 110, and cysteine 114 each coordinate [4Fe-4S] cluster.

Belongs to the complex I 23 kDa subunit family. In terms of assembly, NDH is composed of at least 16 different subunits, 5 of which are encoded in the nucleus. Requires [4Fe-4S] cluster as cofactor.

It is found in the plastid. The protein localises to the chloroplast thylakoid membrane. The catalysed reaction is a plastoquinone + NADH + (n+1) H(+)(in) = a plastoquinol + NAD(+) + n H(+)(out). It catalyses the reaction a plastoquinone + NADPH + (n+1) H(+)(in) = a plastoquinol + NADP(+) + n H(+)(out). In terms of biological role, NDH shuttles electrons from NAD(P)H:plastoquinone, via FMN and iron-sulfur (Fe-S) centers, to quinones in the photosynthetic chain and possibly in a chloroplast respiratory chain. The immediate electron acceptor for the enzyme in this species is believed to be plastoquinone. Couples the redox reaction to proton translocation, and thus conserves the redox energy in a proton gradient. In Guardiola tulocarpus, this protein is NAD(P)H-quinone oxidoreductase subunit I, chloroplastic.